The following is a 435-amino-acid chain: Asparagine--tRNA ligase (435 aa).

This sequence belongs to the class-II aminoacyl-tRNA synthetase family. As to quaternary structure, homodimer.

Its subcellular location is the cytoplasm. The enzyme catalyses tRNA(Asn) + L-asparagine + ATP = L-asparaginyl-tRNA(Asn) + AMP + diphosphate + H(+). The sequence is that of Asparagine--tRNA ligase from Leptospira borgpetersenii serovar Hardjo-bovis (strain JB197).